Consider the following 375-residue polypeptide: Lipid droplet hydrolase 1 (375 aa).

Positions 88 to 358 (VFVFVPGLAG…CSHNLCFDRP (271 aa)) constitute an AB hydrolase-1 domain. Serine 177 serves as the catalytic Charge relay system. A Microbody targeting signal motif is present at residues 373-375 (SKL).

It belongs to the AB hydrolase superfamily. Lipase family.

Its subcellular location is the lipid droplet. It catalyses the reaction a triacylglycerol + H2O = a diacylglycerol + a fatty acid + H(+). Its function is as follows. Serine hydrolase required for the maintenance of steady state level of non-polar and polar lipids of lipid droplets and thus plays a role in maintaining the lipids homeostasis. Exhibits both esterase and triacylglycerol lipase activity. The sequence is that of Lipid droplet hydrolase 1 from Saccharomyces cerevisiae (strain ATCC 204508 / S288c) (Baker's yeast).